We begin with the raw amino-acid sequence, 552 residues long: HTH-type transcriptional regulator SgrR (552 aa).

The 116-residue stretch at 1-116 (MPSGRLQQQF…LISHLGRSFR (116 aa)) folds into the HTH marR-type domain. Positions 26–49 (LNELADLLNCSRRHMRTLLNTMQA) form a DNA-binding region, H-T-H motif. The solute-binding stretch occupies residues 163–493 (ELEADIAHHW…RDWQDDAAQW (331 aa)).

Activates the small RNA gene sgrS under glucose-phosphate stress conditions as well as yfdZ. Represses its own transcription under both stress and non-stress conditions. Might act as a sensor of the intracellular accumulation of phosphoglucose by binding these molecules in its C-terminal solute-binding domain. The chain is HTH-type transcriptional regulator SgrR from Salmonella typhi.